Here is an 82-residue protein sequence, read N- to C-terminus: Beta-insect toxin AaBTxL1 (82 aa).

The N-terminal stretch at 1-22 (MMKLVLFSVIVILFSLIGSIHG) is a signal peptide. In terms of domain architecture, LCN-type CS-alpha/beta spans 25–82 (VPGNYPLDRSGKKYPCTITWKKNPSCIQICKKHGVKYGYCFDFQCWCEIFGRLKTFKI). 3 disulfides stabilise this stretch: cysteine 40-cysteine 64, cysteine 50-cysteine 69, and cysteine 54-cysteine 71.

It belongs to the long (3 C-C) scorpion toxin superfamily. Sodium channel inhibitor family. Beta subfamily. Expressed by the venom gland.

The protein resides in the secreted. Shifts the voltage of activation of para/tipE voltage-dependent sodium channels (Nav) toward more negative potentials. The protein is Beta-insect toxin AaBTxL1 of Androctonus australis (Sahara scorpion).